Reading from the N-terminus, the 493-residue chain is Glutamyl-tRNA(Gln) amidotransferase subunit A (493 aa).

Active-site charge relay system residues include Lys79 and Ser159. Catalysis depends on Ser183, which acts as the Acyl-ester intermediate.

This sequence belongs to the amidase family. GatA subfamily. Heterotrimer of A, B and C subunits.

It carries out the reaction L-glutamyl-tRNA(Gln) + L-glutamine + ATP + H2O = L-glutaminyl-tRNA(Gln) + L-glutamate + ADP + phosphate + H(+). Allows the formation of correctly charged Gln-tRNA(Gln) through the transamidation of misacylated Glu-tRNA(Gln) in organisms which lack glutaminyl-tRNA synthetase. The reaction takes place in the presence of glutamine and ATP through an activated gamma-phospho-Glu-tRNA(Gln). This chain is Glutamyl-tRNA(Gln) amidotransferase subunit A, found in Rhizobium johnstonii (strain DSM 114642 / LMG 32736 / 3841) (Rhizobium leguminosarum bv. viciae).